Reading from the N-terminus, the 287-residue chain is MAEITAALVKELRERTGEGMMDCKKALTKAGGDIEKAIDDMRASGAIKAAKKAGNVAAEGAIAIKDDGKAAVIIEVNSQTDFLALQDDFKAFVAASVEKAFADKLTDVAPLIEAQEAARLVLVGKVGENVNIRRLKRIEGDVVGTYLHGNKIGVVVTLKGGNVELAKDIAMHVAASNPEFLFPSEVSAEAIEREKNVFLQLNEDKIKGKPAEIVEKMVGGRITKFLAEASLVEQAFVKNPEVKVGDLAKKAGAEIVSFTYFKVGDGIEKPVDNFADEVAAQLAAAKQ.

The segment at 80 to 83 is involved in Mg(2+) ion dislocation from EF-Tu; that stretch reads TDFL.

This sequence belongs to the EF-Ts family.

The protein localises to the cytoplasm. Functionally, associates with the EF-Tu.GDP complex and induces the exchange of GDP to GTP. It remains bound to the aminoacyl-tRNA.EF-Tu.GTP complex up to the GTP hydrolysis stage on the ribosome. This chain is Elongation factor Ts, found in Pseudomonas savastanoi pv. phaseolicola (strain 1448A / Race 6) (Pseudomonas syringae pv. phaseolicola (strain 1448A / Race 6)).